A 64-amino-acid polypeptide reads, in one-letter code: Small, acid-soluble spore protein H (64 aa).

It belongs to the SspH family.

It localises to the spore core. In Acetivibrio thermocellus (strain ATCC 27405 / DSM 1237 / JCM 9322 / NBRC 103400 / NCIMB 10682 / NRRL B-4536 / VPI 7372) (Clostridium thermocellum), this protein is Small, acid-soluble spore protein H.